The following is a 261-amino-acid chain: Glucose 1-dehydrogenase 4 (261 aa).

Residue 11–35 (VITGGSTGLGRAMAVRFGQEEAKVV) coordinates NAD(+). Ser145 is a binding site for substrate. Tyr158 acts as the Proton acceptor in catalysis.

It belongs to the short-chain dehydrogenases/reductases (SDR) family. Homotetramer.

The enzyme catalyses D-glucose + NAD(+) = D-glucono-1,5-lactone + NADH + H(+). The catalysed reaction is D-glucose + NADP(+) = D-glucono-1,5-lactone + NADPH + H(+). In Priestia megaterium (Bacillus megaterium), this protein is Glucose 1-dehydrogenase 4 (gdhIV).